The chain runs to 468 residues: Peroxisome proliferator-activated receptor alpha (468 aa).

The interval 1–20 (MVDTESQICPLSPFGDDDLE) is disordered. The segment at residues 99 to 173 (NIECRICGDK…DGMSHNAIRF (75 aa)) is a DNA-binding region (nuclear receptor). NR C4-type zinc fingers lie at residues 102 to 122 (CRIC…CEGC) and 139 to 161 (CDRS…FQKC). Positions 239–466 (FVIHDMETLC…HPLLQEIYRD (228 aa)) constitute an NR LBD domain. Residues 304-433 (DQVTLLKYGV…PKLLQKMADL (130 aa)) form a required for heterodimerization with RXRA region.

It belongs to the nuclear hormone receptor family. NR1 subfamily. In terms of assembly, heterodimer; with RXRA. This heterodimerization is required for DNA binding and transactivation activity. Interacts with NCOA3 coactivator. Interacts with CITED2; the interaction stimulates its transcriptional activity. Also interacts with PPARBP in vitro. Interacts with AKAP13, LPIN1, PRDM16 and coactivator NCOA6. Interacts with ASXL1 and ASXL2. Interacts with PER2. Interacts with SIRT1; the interaction seems to be modulated by NAD(+) levels. Interacts with CRY1 and CRY2. In hepatocytes, interacts with PAQR3 and HUWE1; the interactions promote PPARA poylubiquitination and HUWE1-mediated degradation. Ubiquitinated by E3 ubiquitin-protein ligase HUWE1; leading to proteasomal degradation. Post-translationally, phosphorylated.

The protein localises to the nucleus. Ligand-activated transcription factor. Key regulator of lipid metabolism. Activated by the endogenous ligand 1-palmitoyl-2-oleoyl-sn-glycerol-3-phosphocholine (16:0/18:1-GPC). Activated by oleylethanolamide, a naturally occurring lipid that regulates satiety. Receptor for peroxisome proliferators such as hypolipidemic drugs and fatty acids. Regulates the peroxisomal beta-oxidation pathway of fatty acids. Functions as a transcription activator for the ACOX1 and P450 genes. Transactivation activity requires heterodimerization with RXRA and is antagonized by NR2C2. May be required for the propagation of clock information to metabolic pathways regulated by PER2. This chain is Peroxisome proliferator-activated receptor alpha (PPARA), found in Phascolarctos cinereus (Koala).